The primary structure comprises 599 residues: Stromal 70 kDa heat shock-related protein, chloroplastic (599 aa).

The interval 545-573 (NQPGAGGEPGAAQAQHQEQSSARQIQRAK) is disordered. Low complexity predominate over residues 554 to 568 (GAAQAQHQEQSSARQ).

This sequence belongs to the heat shock protein 70 family.

The protein localises to the plastid. The protein resides in the chloroplast stroma. Its function is as follows. Interacts with newly imported chloroplast proteins to assist in their maturation. The polypeptide is Stromal 70 kDa heat shock-related protein, chloroplastic (CHSP70) (Spinacia oleracea (Spinach)).